Reading from the N-terminus, the 363-residue chain is Carbamoyl phosphate synthase small chain (363 aa).

Positions 1–172 (MKAFLVLDNG…TKYIFGTHTG (172 aa)) are CPSase. The L-glutamine site is built by Ser45, Gly224, and Gly226. A Glutamine amidotransferase type-1 domain is found at 176-362 (KLAVYDYGVK…YDLVETTKRG (187 aa)). Cys252 (nucleophile) is an active-site residue. Residues Leu253, Gln256, Asn294, Gly296, and Phe297 each coordinate L-glutamine. Active-site residues include His335 and Glu337.

It belongs to the CarA family. Composed of two chains; the small (or glutamine) chain promotes the hydrolysis of glutamine to ammonia, which is used by the large (or ammonia) chain to synthesize carbamoyl phosphate. Tetramer of heterodimers (alpha,beta)4.

The enzyme catalyses hydrogencarbonate + L-glutamine + 2 ATP + H2O = carbamoyl phosphate + L-glutamate + 2 ADP + phosphate + 2 H(+). It carries out the reaction L-glutamine + H2O = L-glutamate + NH4(+). It participates in amino-acid biosynthesis; L-arginine biosynthesis; carbamoyl phosphate from bicarbonate: step 1/1. The protein operates within pyrimidine metabolism; UMP biosynthesis via de novo pathway; (S)-dihydroorotate from bicarbonate: step 1/3. Small subunit of the glutamine-dependent carbamoyl phosphate synthetase (CPSase). CPSase catalyzes the formation of carbamoyl phosphate from the ammonia moiety of glutamine, carbonate, and phosphate donated by ATP, constituting the first step of 2 biosynthetic pathways, one leading to arginine and/or urea and the other to pyrimidine nucleotides. The small subunit (glutamine amidotransferase) binds and cleaves glutamine to supply the large subunit with the substrate ammonia. The sequence is that of Carbamoyl phosphate synthase small chain from Leptospira borgpetersenii serovar Hardjo-bovis (strain L550).